Reading from the N-terminus, the 868-residue chain is DNA mismatch repair protein MutS (868 aa).

620 to 627 (GPNMSGKS) lines the ATP pocket.

Belongs to the DNA mismatch repair MutS family.

Its function is as follows. This protein is involved in the repair of mismatches in DNA. It is possible that it carries out the mismatch recognition step. This protein has a weak ATPase activity. The polypeptide is DNA mismatch repair protein MutS (Flavobacterium johnsoniae (strain ATCC 17061 / DSM 2064 / JCM 8514 / BCRC 14874 / CCUG 350202 / NBRC 14942 / NCIMB 11054 / UW101) (Cytophaga johnsonae)).